A 460-amino-acid chain; its full sequence is Trigger factor (460 aa).

The PPIase FKBP-type domain occupies 166–245 (DDFLTIDITA…VKAVKERELP (80 aa)). The tract at residues 434–460 (AAEEAAAGEANEEADVVASDDPAAVKF) is disordered. The span at 449 to 460 (VVASDDPAAVKF) shows a compositional bias: low complexity.

It belongs to the FKBP-type PPIase family. Tig subfamily.

It is found in the cytoplasm. The catalysed reaction is [protein]-peptidylproline (omega=180) = [protein]-peptidylproline (omega=0). Involved in protein export. Acts as a chaperone by maintaining the newly synthesized protein in an open conformation. Functions as a peptidyl-prolyl cis-trans isomerase. This chain is Trigger factor, found in Paenarthrobacter aurescens (strain TC1).